The following is a 568-amino-acid chain: Cytosolic purine 5'-nucleotidase (568 aa).

Asp52 acts as the Nucleophile in catalysis. IMP is bound by residues Asp52 and Asp54. Mg(2+) is bound by residues Asp52 and Asp54. Catalysis depends on Asp54, which acts as the Proton donor. ATP contacts are provided by Arg144 and Asn154. IMP is bound by residues Arg202, Asp206, Lys215, Thr249, Asn250, Ser251, and Lys292. Residue Asp351 coordinates Mg(2+). Residues Gln453 and Arg456 each coordinate ATP. The disordered stretch occupies residues 528–568 (ISEIKPPNLFPQKPQEITHCHDEDDDEEEEEEEEEEEEEEE). A required for tetramer assembly region spans residues 548-568 (HDEDDDEEEEEEEEEEEEEEE). Positions 550 to 568 (EDDDEEEEEEEEEEEEEEE) are enriched in acidic residues.

The protein belongs to the 5'(3')-deoxyribonucleotidase family. In terms of assembly, homotetramer. It depends on Mg(2+) as a cofactor.

The protein resides in the cytoplasm. Its subcellular location is the cytosol. The catalysed reaction is a ribonucleoside 5'-phosphate + H2O = a ribonucleoside + phosphate. It carries out the reaction a 2'-deoxyribonucleoside + a ribonucleoside 5'-phosphate = a ribonucleoside + a 2'-deoxyribonucleoside 5'-phosphate. The enzyme catalyses IMP + H2O = inosine + phosphate. It catalyses the reaction GMP + H2O = guanosine + phosphate. The catalysed reaction is dIMP + H2O = 2'-deoxyinosine + phosphate. It carries out the reaction dGMP + H2O = 2'-deoxyguanosine + phosphate. The enzyme catalyses XMP + H2O = xanthosine + phosphate. It catalyses the reaction inosine + GMP = guanosine + IMP. The catalysed reaction is dGMP + inosine = 2'-deoxyguanosine + IMP. It carries out the reaction dIMP + inosine = 2'-deoxyinosine + IMP. The enzyme catalyses inosine + UMP = uridine + IMP. It catalyses the reaction inosine + CMP = cytidine + IMP. The catalysed reaction is inosine + AMP = IMP + adenosine. With respect to regulation, allosterically activated by various compounds including ATP, 2,3-BPG/2,3-Bisphosphoglyceric acid and Ap4A/P1,P4-bis(5'-adenosyl) tetraphosphate. Binding of an allosteric activator is a prerequisiste to magnesium and substrate binding. Inhibited by inorganic phosphate. Its function is as follows. Broad specificity cytosolic 5'-nucleotidase that catalyzes the dephosphorylation of 6-hydroxypurine nucleoside 5'-monophosphates. In addition, possesses a phosphotransferase activity by which it can transfer a phosphate from a donor nucleoside monophosphate to an acceptor nucleoside, preferably inosine, deoxyinosine and guanosine. Has the highest activities for IMP and GMP followed by dIMP, dGMP and XMP. Could also catalyze the transfer of phosphates from pyrimidine monophosphates but with lower efficiency. Through these activities regulates the purine nucleoside/nucleotide pools within the cell. The protein is Cytosolic purine 5'-nucleotidase (nt5c2) of Xenopus tropicalis (Western clawed frog).